An 88-amino-acid polypeptide reads, in one-letter code: Mini zinc finger protein 3 (88 aa).

The ZF-HD dimerization-type; degenerate zinc-finger motif lies at 26-72 (YVECQKNHAANIGGYAVDGCREFMASGGDDALTCAACGCHRNFHRRE).

Homo- and heterodimers. Interacts with ZHD3, ZHD5, ZHD6, ZHD7, ZHD8, ZHD9, ZHD10 and ZHD13. In terms of tissue distribution, mostly expressed in roots, stems and flowers, present in seedlings and leaves, and weakly observed in inflorescence and siliques.

It localises to the cytoplasm. Its function is as follows. Inhibits zinc finger homeodomain (ZHD) transcription factors by interacting with them to prevent both their nuclear localization and their DNA-binding properties. Involved in integrating signals from multiple hormones by regulating the expression of specific genes. Promotes the formation of ectopic shoot meristems on leaf margins. This chain is Mini zinc finger protein 3 (MIF3), found in Arabidopsis thaliana (Mouse-ear cress).